The chain runs to 391 residues: S-adenosylmethionine synthase 5 (391 aa).

E9 is a Mg(2+) binding site. H15 is an ATP binding site. E43 provides a ligand contact to K(+). E56 and Q99 together coordinate L-methionine. ATP contacts are provided by residues 167–169, 235–238, D246, 252–253, A269, K273, and K277; these read DGK, SGRF, and RK. L-methionine is bound at residue D246. L-methionine is bound at residue K277.

Belongs to the AdoMet synthase family. In terms of assembly, homotetramer. Requires Mn(2+) as cofactor. The cofactor is Mg(2+). Co(2+) serves as cofactor. It depends on K(+) as a cofactor.

The protein localises to the cytoplasm. It catalyses the reaction L-methionine + ATP + H2O = S-adenosyl-L-methionine + phosphate + diphosphate. It participates in amino-acid biosynthesis; S-adenosyl-L-methionine biosynthesis; S-adenosyl-L-methionine from L-methionine: step 1/1. Functionally, catalyzes the formation of S-adenosylmethionine from methionine and ATP. The reaction comprises two steps that are both catalyzed by the same enzyme: formation of S-adenosylmethionine (AdoMet) and triphosphate, and subsequent hydrolysis of the triphosphate. The polypeptide is S-adenosylmethionine synthase 5 (METK5) (Vitis vinifera (Grape)).